Here is a 753-residue protein sequence, read N- to C-terminus: Nibrin (753 aa).

An FHA domain is found at 22–81 (YVVGRKNCAFLIQDDQSISRSHAVLTVSRPETTHSQSVSVPVLTIKDTSKYGTFVNGSKL). 2 consecutive BRCT domains span residues 101–191 (SKFR…PTPE) and 221–311 (GKTF…LAVI). Ser274 is subject to Phosphoserine. Ser343 is subject to Phosphoserine; by ATM. The segment at 442-606 (RECTPRQQSN…NTKQREENEM (165 aa)) is disordered. The segment covering 446-455 (PRQQSNSITN) has biased composition (polar residues). Residues 461 to 467 (RKRERAE) carry the Nuclear localization signal motif. Positions 490–500 (CTESSASSAWN) are enriched in polar residues. Residues 517-528 (ESGELASDKTDI) show a composition bias toward basic and acidic residues. Polar residues predominate over residues 568 to 577 (QTANGDQEAQ). Residues 585 to 606 (CLETKGSRTEEGNTKQREENEM) are compositionally biased toward basic and acidic residues. A FxF/Y motif motif is present at residues 739–748 (ADDLFRYDPN).

The protein belongs to the Nibrin family. As to quaternary structure, component of the MRN complex composed of two heterodimers RAD50 and mre11 associated with a single NBN.

The protein resides in the nucleus. Its subcellular location is the chromosome. It is found in the PML body. The protein localises to the telomere. In terms of biological role, component of the MRN complex, which plays a central role in double-strand break (DSB) repair, DNA recombination, maintenance of telomere integrity and meiosis. The MRN complex is involved in the repair of DNA double-strand breaks (DSBs) via homologous recombination (HR), an error-free mechanism which primarily occurs during S and G2 phases. The complex (1) mediates the end resection of damaged DNA, which generates proper single-stranded DNA, a key initial steps in HR, and is (2) required for the recruitment of other repair factors and efficient activation of ATM and ATR upon DNA damage. The MRN complex possesses single-strand endonuclease activity and double-strand-specific 3'-5' exonuclease activity, which are provided by MRE11, to initiate end resection, which is required for single-strand invasion and recombination. Within the MRN complex, NBN acts as a protein-protein adapter, which specifically recognizes and binds phosphorylated proteins, promoting their recruitment to DNA damage sites. Recruits MRE11 and RAD50 components of the MRN complex to DSBs in response to DNA damage. Promotes the recruitment of PI3/PI4-kinase family members ATM, ATR, and probably DNA-PKcs to the DNA damage sites, activating their functions. Mediates the recruitment of phosphorylated RBBP8/CtIP to DSBs, leading to cooperation between the MRN complex and RBBP8/CtIP to initiate end resection. The MRN complex and rbbp8/CtIP are also required for chromosome alignment during metaphase. This chain is Nibrin (NBN), found in Gallus gallus (Chicken).